The chain runs to 395 residues: MKHVIMLYFIAAATLFSSCAKQDSEHRLITVKNSLDLPRAFETIEISKSDIQLHTGERFEDFSIQDVATKAILTSQFVDEDQDGTADVLLFQPELNPNSEKQFELVKVDGGVEVDSTVYCYSRFVPERTDDYTWENNKVAFRTYGPVAQKMVEDSLPGGTLSSGIDAWLKKVEYSIIDNWYAKNDKDPGYYHIDHGEGLDNFHVGSSRGVGGSAVKVDTSYYISKNFTDYKTITTGPIRTSFILKYADWDANEKTISEEKHISLDYGNNFSRFEIHVDGTDELSVGLTLHDNKGEITQNVDQGWIAYWESEYFDSELGTAIVAPKGVMTASEYYVTSMKDRSNLYAQLNVDNNKVVYYAGFAWKESKQYPTKASWEKYIQEFSEKLNTPLEVSIQ.

Positions 1–18 (MKHVIMLYFIAAATLFSS) are cleaved as a signal peptide. The N-palmitoyl cysteine moiety is linked to residue Cys19. The S-diacylglycerol cysteine moiety is linked to residue Cys19.

It is found in the cell outer membrane. May be involved in ulvan degradation. Ulvan is the main polysaccharide component of the Ulvales (green seaweed) cell wall. It is composed of disaccharide building blocks comprising 3-sulfated rhamnose (Rha3S) linked to D-glucuronic acid (GlcA), L-iduronic acid (IduA), or D-xylose (Xyl). This is an uncharacterized protein from Formosa agariphila (strain DSM 15362 / KCTC 12365 / LMG 23005 / KMM 3901 / M-2Alg 35-1).